A 312-amino-acid chain; its full sequence is Porphobilinogen deaminase (312 aa).

Position 241 is an S-(dipyrrolylmethanemethyl)cysteine (Cys-241).

It belongs to the HMBS family. As to quaternary structure, monomer. Dipyrromethane is required as a cofactor.

The enzyme catalyses 4 porphobilinogen + H2O = hydroxymethylbilane + 4 NH4(+). It functions in the pathway porphyrin-containing compound metabolism; protoporphyrin-IX biosynthesis; coproporphyrinogen-III from 5-aminolevulinate: step 2/4. It participates in porphyrin-containing compound metabolism; chlorophyll biosynthesis. In terms of biological role, tetrapolymerization of the monopyrrole PBG into the hydroxymethylbilane pre-uroporphyrinogen in several discrete steps. This chain is Porphobilinogen deaminase, found in Chlorobaculum tepidum (strain ATCC 49652 / DSM 12025 / NBRC 103806 / TLS) (Chlorobium tepidum).